The following is a 159-amino-acid chain: Ribosomal RNA large subunit methyltransferase H (159 aa).

Residues L76, G108, and 127–132 (FGQLTL) each bind S-adenosyl-L-methionine.

The protein belongs to the RNA methyltransferase RlmH family. As to quaternary structure, homodimer.

The protein resides in the cytoplasm. It catalyses the reaction pseudouridine(1915) in 23S rRNA + S-adenosyl-L-methionine = N(3)-methylpseudouridine(1915) in 23S rRNA + S-adenosyl-L-homocysteine + H(+). Functionally, specifically methylates the pseudouridine at position 1915 (m3Psi1915) in 23S rRNA. This chain is Ribosomal RNA large subunit methyltransferase H, found in Streptococcus suis (strain 05ZYH33).